Reading from the N-terminus, the 458-residue chain is MENKTETTVRRRRRIILFPVPFQGHINPILQLANVLYSKGFSITIFHTNFNKPKTSNYPHFTFRFILDNDPQDERISNLPTHGPLAGMRIPIINEHGADELRRELELLMLASEEDEEVSCLITDALWYFAQSVADSLNLRRLVLMTSSLFNFHAHVSLPQFDELGYLDPDDKTRLEEQASGFPMLKVKDIKSAYSNWQILKEILGKMIKQTKASSGVIWNSFKELEESELETVIREIPAPSFLIPLPKHLTASSSSLLDHDRTVFQWLDQQPPSSVLYVSFGSTSEVDEKDFLEIARGLVDSKQSFLWVVRPGFVKGSTWVEPLPDGFLGERGRIVKWVPQQEVLAHGAIGAFWTHSGWNSTLESVCEGVPMIFSDFGLDQPLNARYMSDVLKVGVYLENGWERGEIANAIRRVMVDEEGEYIRQNARVLKQKADVSLMKGGSSYESLESLVSYISSL.

The active-site Proton acceptor is the H25. H25 provides a ligand contact to rebaudioside A. Residue H25 participates in rubusoside binding. N27 lines the UDP pocket. D124 acts as the Charge relay in catalysis. Residues 146 to 147 (TS) and H155 contribute to the rebaudioside A site. UDP is bound by residues S283, 338 to 339 (WV), and 356 to 364 (HSGWNSTLE). Rebaudioside A contacts are provided by residues W359 and 380 to 381 (DQ).

The protein belongs to the UDP-glycosyltransferase family. As to quaternary structure, monomer.

It carries out the reaction steviolbioside + UDP-alpha-D-glucose = rebaudioside B + UDP + H(+). It catalyses the reaction stevioside + UDP-alpha-D-glucose = rebaudioside A + UDP + H(+). The enzyme catalyses rebaudioside E + UDP-alpha-D-glucose = rebaudioside D + UDP + H(+). The catalysed reaction is rebaudioside D + UDP-alpha-D-glucose = rebaudioside M + UDP + H(+). Its function is as follows. Involved in the biosynthesis of steviol glycosides in leaves. Converts the di-glycoside steviolbioside to the tri-glycoside rebaudioside B. Converts the tri-glycoside stevioside to the tetra-glycoside rebaudioside A. Converts the tetra-glycoside rebaudioside E to the penta-glycoside rebaudioside D. Converts the penta-glycoside rebaudioside D to the hexa-glycoside rebaudioside M. Can glucosylate rubusoside and rebaudioside A in vitro. The sequence is that of UDP-glycosyltransferase 76G1 from Stevia rebaudiana (Stevia).